The chain runs to 149 residues: MAEKLSEQQIAEFKEAFSLFDKDSDGKITTKELGTVMRSLGQNPSESELTDMINEVDVNSDGSIDFPEFLTMMARKMKDTDSEAEIAEAFKVFDRNGDGKISAAELRHLLTSIGEKLSDADVDQMIKEADTNNDGEIDIQEFTSLLAAK.

4 EF-hand domains span residues 8 to 43 (QQIA…LGQN), 44 to 79 (PSES…KMKD), 81 to 116 (DSEA…IGEK), and 117 to 149 (LSDA…LAAK). Asp-21, Asp-23, Asp-25, Lys-27, Glu-32, Asp-57, Asn-59, Asp-61, Ser-63, Glu-68, Asp-94, Asn-96, Asp-98, Lys-100, Glu-105, Asp-130, Asn-132, Asp-134, Glu-136, and Glu-141 together coordinate Ca(2+).

This sequence belongs to the calmodulin family.

Calmodulin mediates the control of a large number of enzymes, ion channels and other proteins by Ca(2+). Among the enzymes to be stimulated by the calmodulin-Ca(2+) complex are a number of protein kinases and phosphatases. This chain is Calmodulin (CMD1), found in Candida albicans (Yeast).